The following is a 499-amino-acid chain: Gypsy retrotransposon integrase-like protein 1 (499 aa).

In terms of domain architecture, Integrase catalytic spans K113–N270.

The polypeptide is Gypsy retrotransposon integrase-like protein 1 (GIN1) (Bos taurus (Bovine)).